We begin with the raw amino-acid sequence, 465 residues long: E3 ubiquitin-protein ligase TRIM38 (465 aa).

The segment at 16 to 63 (CSICLSLMTNPVSINCGHSYCHLCITDFFKNPSQKQLRQETFCCPQCR) adopts an RING-type zinc-finger fold. A Phosphoserine modification is found at S70. The B box-type zinc finger occupies 88 to 129 (DQEMSCEEHGEQFHLFCEDEGQLICWRCERAPQHKGHTTALV). Positions 93, 96, 115, and 121 each coordinate Zn(2+). The B30.2/SPRY domain occupies 274-465 (CNVSKLYFDV…SPLFLPPPGD (192 aa)).

In terms of assembly, interacts (via B30.2/SPRY domain) with TAB2 and TAB3. As to expression, ubiquitous.

The protein resides in the cytoplasm. It catalyses the reaction S-ubiquitinyl-[E2 ubiquitin-conjugating enzyme]-L-cysteine + [acceptor protein]-L-lysine = [E2 ubiquitin-conjugating enzyme]-L-cysteine + N(6)-ubiquitinyl-[acceptor protein]-L-lysine.. It functions in the pathway protein modification; protein ubiquitination. It participates in protein modification; protein sumoylation. In terms of biological role, E3 ubiquitin-protein and E3 SUMO-protein ligase that acts as a regulator of innate immunity. Acts as a negative regulator of type I interferon IFN-beta production by catalyzing 'Lys-48'-linked polyubiquitination of AZI2/NAP1, leading to its degradation. Mediates 'Lys-48'-linked polyubiquitination and proteasomal degradation of the critical TLR adapter TICAM1, inhibiting TLR3-mediated type I interferon signaling. Acts as positive regulator of the cGAS-STING pathway by acting as a E3 SUMO-protein ligase: mediates sumoylation of CGAS and STING, preventing their degradation and thereby activating the innate immune response to DNA virus. Also acts as a negative regulator of NF-kappa-B signaling independently of its E3 protein ligase activity by promoting lysosome-dependent degradation of TAB2 and TAB3 adapters. The sequence is that of E3 ubiquitin-protein ligase TRIM38 from Homo sapiens (Human).